The primary structure comprises 547 residues: Chaperonin GroEL (547 aa).

ATP contacts are provided by residues 30-33 (TLGP), lysine 51, 87-91 (DGTTT), glycine 415, 479-481 (NAA), and aspartate 495.

It belongs to the chaperonin (HSP60) family. Forms a cylinder of 14 subunits composed of two heptameric rings stacked back-to-back. Interacts with the co-chaperonin GroES.

The protein resides in the cytoplasm. It carries out the reaction ATP + H2O + a folded polypeptide = ADP + phosphate + an unfolded polypeptide.. Together with its co-chaperonin GroES, plays an essential role in assisting protein folding. The GroEL-GroES system forms a nano-cage that allows encapsulation of the non-native substrate proteins and provides a physical environment optimized to promote and accelerate protein folding. This Nitratidesulfovibrio vulgaris (strain ATCC 29579 / DSM 644 / CCUG 34227 / NCIMB 8303 / VKM B-1760 / Hildenborough) (Desulfovibrio vulgaris) protein is Chaperonin GroEL.